Consider the following 239-residue polypeptide: DNA repair protein RecO (239 aa).

Belongs to the RecO family.

Involved in DNA repair and RecF pathway recombination. The protein is DNA repair protein RecO of Bifidobacterium longum subsp. infantis (strain ATCC 15697 / DSM 20088 / JCM 1222 / NCTC 11817 / S12).